Consider the following 554-residue polypeptide: Oxygen-dependent choline dehydrogenase (554 aa).

4 to 33 (DYIIIGAGSAGNVLATRLTEDPNTTVLLLE) serves as a coordination point for FAD. The active-site Proton acceptor is His-473.

This sequence belongs to the GMC oxidoreductase family. FAD is required as a cofactor.

It carries out the reaction choline + A = betaine aldehyde + AH2. The catalysed reaction is betaine aldehyde + NAD(+) + H2O = glycine betaine + NADH + 2 H(+). It participates in amine and polyamine biosynthesis; betaine biosynthesis via choline pathway; betaine aldehyde from choline (cytochrome c reductase route): step 1/1. Functionally, involved in the biosynthesis of the osmoprotectant glycine betaine. Catalyzes the oxidation of choline to betaine aldehyde and betaine aldehyde to glycine betaine at the same rate. The protein is Oxygen-dependent choline dehydrogenase of Klebsiella pneumoniae (strain 342).